The following is a 92-amino-acid chain: Small ribosomal subunit protein uS17 (92 aa).

This sequence belongs to the universal ribosomal protein uS17 family. In terms of assembly, part of the 30S ribosomal subunit.

Functionally, one of the primary rRNA binding proteins, it binds specifically to the 5'-end of 16S ribosomal RNA. The polypeptide is Small ribosomal subunit protein uS17 (Cupriavidus metallidurans (strain ATCC 43123 / DSM 2839 / NBRC 102507 / CH34) (Ralstonia metallidurans)).